We begin with the raw amino-acid sequence, 236 residues long: Small ribosomal subunit protein uS3 (236 aa).

The KH type-2 domain maps to 39 to 112 (IREFITKHPK…RINLKVEEVG (74 aa)). Residues 212–236 (YGDDNDGADAQTGQASKKPKRSYKR) form a disordered region.

Belongs to the universal ribosomal protein uS3 family. In terms of assembly, part of the 30S ribosomal subunit. Forms a tight complex with proteins S10 and S14.

Its function is as follows. Binds the lower part of the 30S subunit head. Binds mRNA in the 70S ribosome, positioning it for translation. The sequence is that of Small ribosomal subunit protein uS3 from Rhodopirellula baltica (strain DSM 10527 / NCIMB 13988 / SH1).